Reading from the N-terminus, the 38-residue chain is MKVKASVGKRCEYCKVIRRRGKVYVVCKVNPKHNQRQG.

The protein belongs to the bacterial ribosomal protein bL36 family.

The protein is Large ribosomal subunit protein bL36 of Fervidobacterium nodosum (strain ATCC 35602 / DSM 5306 / Rt17-B1).